A 79-amino-acid polypeptide reads, in one-letter code: SALFLAMHYTPDTLTAFSSVTHICRDVNYGWLIRYIHANGASLFFICLYLHIGRGIYYGSYSYMETWNIGIILLFLTMA.

3 consecutive transmembrane segments (helical) span residues 1–7, 31–52, and 67–79; these read SALFLAM, WLIRYIHANGASLFFICLYLHI, and WNIGIILLFLTMA. 2 residues coordinate heme b: histidine 37 and histidine 51.

Belongs to the cytochrome b family. In terms of assembly, the cytochrome bc1 complex contains 11 subunits: 3 respiratory subunits (MT-CYB, CYC1 and UQCRFS1), 2 core proteins (UQCRC1 and UQCRC2) and 6 low-molecular weight proteins (UQCRH/QCR6, UQCRB/QCR7, UQCRQ/QCR8, UQCR10/QCR9, UQCR11/QCR10 and a cleavage product of UQCRFS1). This cytochrome bc1 complex then forms a dimer. Heme b serves as cofactor.

It is found in the mitochondrion inner membrane. Component of the ubiquinol-cytochrome c reductase complex (complex III or cytochrome b-c1 complex) that is part of the mitochondrial respiratory chain. The b-c1 complex mediates electron transfer from ubiquinol to cytochrome c. Contributes to the generation of a proton gradient across the mitochondrial membrane that is then used for ATP synthesis. This chain is Cytochrome b (MT-CYB), found in Dipodomys panamintinus (Panamint kangaroo rat).